Here is a 343-residue protein sequence, read N- to C-terminus: DNA-directed RNA polymerase subunit alpha (343 aa).

Residues 1 to 243 (MTQEIDEKIP…EQLDIFINFD (243 aa)) are alpha N-terminal domain (alpha-NTD). The alpha C-terminal domain (alpha-CTD) stretch occupies residues 261 to 343 (ENPYLDKPVE…NAPSDAETEE (83 aa)).

The protein belongs to the RNA polymerase alpha chain family. In terms of assembly, homodimer. The RNAP catalytic core consists of 2 alpha, 1 beta, 1 beta' and 1 omega subunit. When a sigma factor is associated with the core the holoenzyme is formed, which can initiate transcription.

It catalyses the reaction RNA(n) + a ribonucleoside 5'-triphosphate = RNA(n+1) + diphosphate. Its function is as follows. DNA-dependent RNA polymerase catalyzes the transcription of DNA into RNA using the four ribonucleoside triphosphates as substrates. This Desulfotalea psychrophila (strain LSv54 / DSM 12343) protein is DNA-directed RNA polymerase subunit alpha.